Consider the following 572-residue polypeptide: E3 ubiquitin-protein ligase ZFP91 (572 aa).

A compositionally biased stretch (basic and acidic residues) spans 1 to 12 (MPGETEEPRSPE). The interval 1-308 (MPGETEEPRS…PRLPKRRKKP (308 aa)) is disordered. Positions 61-70 (AAAAAAAAAA) are enriched in low complexity. Residues 72–85 (SRRRKAEYPRRRRS) are compositionally biased toward basic residues. A phosphoserine mark is found at Ser86 and Ser106. The span at 122 to 131 (LTTDKDPKEE) shows a compositional bias: basic and acidic residues. The span at 143–162 (SITTTRASRSWRSSSRTSIS) shows a compositional bias: low complexity. Residues 209 to 225 (SDEEEEEEEEMLISEEE) show a composition bias toward acidic residues. Composition is skewed to basic and acidic residues over residues 226–247 (IPFKDDPRDETYKPHLERETPK) and 254–271 (KVKEEKEKKEIKVEVEVE). A compositionally biased stretch (acidic residues) spans 272-284 (VKEEENEIREDEE). C2H2-type zinc fingers lie at residues 313 to 338 (VRCEMEGCGTVLAHPRYLQHHIKYQH), 344 to 368 (YVCPHPSCGRLFRLQKQLLRHAKHH), 374 to 396 (YICEYCARAFKSSHNLAVHRMIH), 402 to 424 (LQCEICGFTCRQKASLNWHMKKH), and 432 to 455 (FSCNICGKKFEKKDSVVAHKAKSH). The interaction with MAP3K14/NIK stretch occupies residues 340–370 (LKKKYVCPHPSCGRLFRLQKQLLRHAKHHTD).

The protein belongs to the krueppel C2H2-type zinc-finger protein family. As to quaternary structure, interacts with MAP3K14/NIK. In terms of tissue distribution, found in all the examined tissues including brain, heart, kidney, lung, liver, spleen, thymus, skeletal muscle, ovary and testis.

It localises to the nucleus. It carries out the reaction S-ubiquitinyl-[E2 ubiquitin-conjugating enzyme]-L-cysteine + [acceptor protein]-L-lysine = [E2 ubiquitin-conjugating enzyme]-L-cysteine + N(6)-ubiquitinyl-[acceptor protein]-L-lysine.. It functions in the pathway protein modification; protein ubiquitination. Its function is as follows. Atypical E3 ubiquitin-protein ligase that mediates 'Lys-63'-linked ubiquitination of MAP3K14/NIK, leading to stabilize and activate MAP3K14/NIK. It thereby acts as an activator of the non-canonical NF-kappa-B2/NFKB2 pathway. May also play an important role in cell proliferation and/or anti-apoptosis. This chain is E3 ubiquitin-protein ligase ZFP91 (Zfp91), found in Mus musculus (Mouse).